A 308-amino-acid polypeptide reads, in one-letter code: Formamidopyrimidine-DNA glycosylase (308 aa).

Pro-2 serves as the catalytic Schiff-base intermediate with DNA. Glu-3 functions as the Proton donor in the catalytic mechanism. Lys-61 (proton donor; for beta-elimination activity) is an active-site residue. DNA is bound by residues His-100, Arg-120, and Arg-181. The FPG-type zinc finger occupies 267-301; sequence AVYGQEGRPCPRCGALVRRDAFMNRSSFSCPVCQP. Arg-291 functions as the Proton donor; for delta-elimination activity in the catalytic mechanism.

The protein belongs to the FPG family. In terms of assembly, monomer. The cofactor is Zn(2+).

It catalyses the reaction Hydrolysis of DNA containing ring-opened 7-methylguanine residues, releasing 2,6-diamino-4-hydroxy-5-(N-methyl)formamidopyrimidine.. The catalysed reaction is 2'-deoxyribonucleotide-(2'-deoxyribose 5'-phosphate)-2'-deoxyribonucleotide-DNA = a 3'-end 2'-deoxyribonucleotide-(2,3-dehydro-2,3-deoxyribose 5'-phosphate)-DNA + a 5'-end 5'-phospho-2'-deoxyribonucleoside-DNA + H(+). Involved in base excision repair of DNA damaged by oxidation or by mutagenic agents. Acts as a DNA glycosylase that recognizes and removes damaged bases. Has a preference for oxidized purines, such as 7,8-dihydro-8-oxoguanine (8-oxoG). Has AP (apurinic/apyrimidinic) lyase activity and introduces nicks in the DNA strand. Cleaves the DNA backbone by beta-delta elimination to generate a single-strand break at the site of the removed base with both 3'- and 5'-phosphates. The chain is Formamidopyrimidine-DNA glycosylase from Kineococcus radiotolerans (strain ATCC BAA-149 / DSM 14245 / SRS30216).